Here is a 480-residue protein sequence, read N- to C-terminus: Porphobilinogen deaminase, chloroplastic (480 aa).

The N-terminal 139 residues, M1–A139, are a transit peptide targeting the chloroplast. Residue C395 is modified to S-(dipyrrolylmethanemethyl)cysteine.

It belongs to the HMBS family. The cofactor is dipyrromethane.

The protein localises to the plastid. It is found in the chloroplast. It carries out the reaction 4 porphobilinogen + H2O = hydroxymethylbilane + 4 NH4(+). It participates in porphyrin-containing compound metabolism; protoporphyrin-IX biosynthesis; coproporphyrinogen-III from 5-aminolevulinate: step 2/4. It functions in the pathway porphyrin-containing compound metabolism; chlorophyll biosynthesis. Functionally, tetrapolymerization of the monopyrrole PBG into the hydroxymethylbilane pre-uroporphyrinogen in several discrete steps. In Euglena gracilis, this protein is Porphobilinogen deaminase, chloroplastic.